Reading from the N-terminus, the 360-residue chain is Peptide chain release factor 1 (360 aa).

Glutamine 235 is modified (N5-methylglutamine). The disordered stretch occupies residues 284–313 (AKRQQAEASTRRNLLGSGDRSDRNRTYNFP).

It belongs to the prokaryotic/mitochondrial release factor family. In terms of processing, methylated by PrmC. Methylation increases the termination efficiency of RF1.

Its subcellular location is the cytoplasm. Its function is as follows. Peptide chain release factor 1 directs the termination of translation in response to the peptide chain termination codons UAG and UAA. This is Peptide chain release factor 1 from Escherichia coli (strain UTI89 / UPEC).